Reading from the N-terminus, the 351-residue chain is DNA polymerase IV (351 aa).

The 182-residue stretch at 4–185 (IIHVDMDCFY…LPLGKIPGVG (182 aa)) folds into the UmuC domain. Asp-8 and Asp-103 together coordinate Mg(2+). Glu-104 is a catalytic residue.

It belongs to the DNA polymerase type-Y family. As to quaternary structure, monomer. Mg(2+) serves as cofactor.

The protein localises to the cytoplasm. The enzyme catalyses DNA(n) + a 2'-deoxyribonucleoside 5'-triphosphate = DNA(n+1) + diphosphate. Functionally, poorly processive, error-prone DNA polymerase involved in untargeted mutagenesis. Copies undamaged DNA at stalled replication forks, which arise in vivo from mismatched or misaligned primer ends. These misaligned primers can be extended by PolIV. Exhibits no 3'-5' exonuclease (proofreading) activity. May be involved in translesional synthesis, in conjunction with the beta clamp from PolIII. The polypeptide is DNA polymerase IV (Citrobacter koseri (strain ATCC BAA-895 / CDC 4225-83 / SGSC4696)).